Here is a 566-residue protein sequence, read N- to C-terminus: Oxygen-dependent choline dehydrogenase (566 aa).

7 to 36 (DYIICGAGSAGNVLATRLTEDPDVTVLLLE) serves as a coordination point for FAD. Positions 180–202 (NGYQQEGFGPMDRTVTPKGRRAS) are disordered. Residue histidine 474 is the Proton acceptor of the active site.

The protein belongs to the GMC oxidoreductase family. It depends on FAD as a cofactor.

The catalysed reaction is choline + A = betaine aldehyde + AH2. It carries out the reaction betaine aldehyde + NAD(+) + H2O = glycine betaine + NADH + 2 H(+). It functions in the pathway amine and polyamine biosynthesis; betaine biosynthesis via choline pathway; betaine aldehyde from choline (cytochrome c reductase route): step 1/1. Involved in the biosynthesis of the osmoprotectant glycine betaine. Catalyzes the oxidation of choline to betaine aldehyde and betaine aldehyde to glycine betaine at the same rate. This is Oxygen-dependent choline dehydrogenase from Burkholderia lata (strain ATCC 17760 / DSM 23089 / LMG 22485 / NCIMB 9086 / R18194 / 383).